Reading from the N-terminus, the 236-residue chain is Endonuclease V (236 aa).

Mg(2+)-binding residues include Asp47 and Asp115.

Belongs to the endonuclease V family. The cofactor is Mg(2+).

The protein localises to the cytoplasm. It carries out the reaction Endonucleolytic cleavage at apurinic or apyrimidinic sites to products with a 5'-phosphate.. Its function is as follows. DNA repair enzyme involved in the repair of deaminated bases. Selectively cleaves double-stranded DNA at the second phosphodiester bond 3' to a deoxyinosine leaving behind the intact lesion on the nicked DNA. The chain is Endonuclease V from Xanthomonas campestris pv. campestris (strain B100).